We begin with the raw amino-acid sequence, 232 residues long: UPF0758 protein FN0909 (232 aa).

Residues 110–232 (KISNKDILLK…YFSFLEEGLI (123 aa)) form the MPN domain. 3 residues coordinate Zn(2+): H181, H183, and D194. The JAMM motif motif lies at 181–194 (HNHPSDNITPSKSD).

Belongs to the UPF0758 family.

This chain is UPF0758 protein FN0909, found in Fusobacterium nucleatum subsp. nucleatum (strain ATCC 25586 / DSM 15643 / BCRC 10681 / CIP 101130 / JCM 8532 / KCTC 2640 / LMG 13131 / VPI 4355).